The chain runs to 258 residues: Microtubule-associated protein RP/EB family member 1 (258 aa).

In terms of domain architecture, Calponin-homology (CH) spans 14–116 (NLSRHDMLAW…FVQWFKKFFD (103 aa)). An EB1 C-terminal domain is found at 175–245 (KKAAGDDESA…LYATDEGFVI (71 aa)).

The protein belongs to the MAPRE family.

The protein localises to the cytoplasm. Its subcellular location is the cytoskeleton. It localises to the microtubule organizing center. The protein resides in the centrosome. It is found in the golgi apparatus. The protein localises to the spindle. Its subcellular location is the spindle pole. Its function is as follows. Plus-end tracking protein (+TIP) that binds to the plus-end of microtubules and regulates the dynamics of the microtubule cytoskeleton. Promotes cytoplasmic microtubule nucleation and elongation. Involved in mitotic spindle positioning by stabilizing microtubules and promoting dynamic connection between astral microtubules and the cortex during mitotic chromosome segregation. This Gallus gallus (Chicken) protein is Microtubule-associated protein RP/EB family member 1 (MAPRE1).